The chain runs to 514 residues: Light-independent protochlorophyllide reductase subunit B (514 aa).

A [4Fe-4S] cluster-binding site is contributed by D36. D300 acts as the Proton donor in catalysis. Substrate is bound at residue 435-436 (GM).

Belongs to the ChlB/BchB/BchZ family. In terms of assembly, protochlorophyllide reductase is composed of three subunits; ChlL, ChlN and ChlB. Forms a heterotetramer of two ChlB and two ChlN subunits. [4Fe-4S] cluster serves as cofactor.

Its subcellular location is the plastid. It is found in the chloroplast. It catalyses the reaction chlorophyllide a + oxidized 2[4Fe-4S]-[ferredoxin] + 2 ADP + 2 phosphate = protochlorophyllide a + reduced 2[4Fe-4S]-[ferredoxin] + 2 ATP + 2 H2O. The protein operates within porphyrin-containing compound metabolism; chlorophyll biosynthesis (light-independent). Functionally, component of the dark-operative protochlorophyllide reductase (DPOR) that uses Mg-ATP and reduced ferredoxin to reduce ring D of protochlorophyllide (Pchlide) to form chlorophyllide a (Chlide). This reaction is light-independent. The NB-protein (ChlN-ChlB) is the catalytic component of the complex. The sequence is that of Light-independent protochlorophyllide reductase subunit B from Pleurastrum terricola (Filamentous green alga).